The primary structure comprises 320 residues: MATGTQQKENTLLHLFAGGCGGTVGAIFTCPLEVIKTRLQSSRLALRTVYYPQVHLGTISGAGMVRPTSVTPGLLQVLKSILEKEGPKSLFRGLGPNLVGVAPSRAVYFACYSKAKEQFNGIFVPNSNTVHILSAGSAAFVTNTLMNPIWMVKTRMQLERKVRGCKQMNTLQCARRVYQTEGVRGFYRGLTASYAGISETIICFAIYESLKKCLKDAPIVSSTDGAEKSSSGFFGLMAAAAVSKGCASCIAYPHEVIRTRLREEGSKYRSFVQTARLVFREEGYLAFYRGLFAQLIRQIPNTAIVLSTYEFIVYLLGERA.

Solcar repeat units lie at residues 9–118 (ENTL…AKEQ), 126–213 (NSNT…LKKC), and 231–315 (SGFF…IVYL). 6 helical membrane-spanning segments follow: residues 12 to 32 (LLHL…TCPL), 49 to 65 (VYYP…AGMV), 121 to 141 (GIFV…AAFV), 190 to 210 (LTAS…YESL), 233 to 253 (FFGL…IAYP), and 298 to 318 (QIPN…LLGE).

It belongs to the mitochondrial carrier (TC 2.A.29) family.

The protein resides in the mitochondrion inner membrane. It carries out the reaction UTP(in) + UDP(out) = UTP(out) + UDP(in). The catalysed reaction is dUTP(out) + UTP(in) = dUTP(in) + UTP(out). It catalyses the reaction 5-methyl-UTP(out) + UTP(in) = 5-methyl-UTP(in) + UTP(out). The enzyme catalyses 5-methyl-UDP(out) + UTP(in) = 5-methyl-UDP(in) + UTP(out). It carries out the reaction UTP(in) + CTP(out) = UTP(out) + CTP(in). The catalysed reaction is CDP(out) + UTP(in) = CDP(in) + UTP(out). It catalyses the reaction dCTP(out) + UTP(in) = dCTP(in) + UTP(out). The enzyme catalyses dCDP(out) + UTP(in) = dCDP(in) + UTP(out). It carries out the reaction UTP(in) + GTP(out) = UTP(out) + GTP(in). The catalysed reaction is UTP(in) + GDP(out) = UTP(out) + GDP(in). It catalyses the reaction dGTP(out) + UTP(in) = dGTP(in) + UTP(out). The enzyme catalyses dGDP(out) + UTP(in) = dGDP(in) + UTP(out). It carries out the reaction ITP(out) + UTP(in) = ITP(in) + UTP(out). Functionally, mitochondrial transporter that imports/exports pyrimidine nucleotides into and from mitochondria. Selectively transports uridine, thymidine, guanosine, cytosine and inosine (deoxy)nucleoside di- and triphosphates by an antiport mechanism. May import (deoxy)nucleoside triphosphates in exchange for intramitochondrial (deoxy)nucleoside diphosphates, thus providing precursors necessary for de novo synthesis of mitochondrial DNA and RNA while exporting products of their catabolism. Participates in mitochondrial genome maintenance, regulation of mitochondrial membrane potential and mitochondrial respiration. Upon INS or IGF1 stimulation regulates cell growth and proliferation by controlling mitochondrial DNA replication and transcription, the ratio of mitochondria-to nuclear-encoded components of the electron transport chain resulting in control of mitochondrial ROS production. Participates in dendritic cell endocytosis and may associate with mitochondrial oxidative phosphorylation. The sequence is that of Solute carrier family 25 member 33 (Slc25a33) from Mus musculus (Mouse).